The following is a 227-amino-acid chain: Agamous-like MADS-box protein AGL17 (227 aa).

Residues 3-57 enclose the MADS-box domain; that stretch reads RGKIVIQKIDDSTSRQVTFSKRRKGLIKKAKELAILCDAEVCLIIFSNTDKLYDF. The K-box domain occupies 86 to 176; that stretch reads VKFWQREAET…SRKVQRIHQE (91 aa).

As to expression, preferentially expressed in roots.

Its subcellular location is the nucleus. Probable transcription factor. In Arabidopsis thaliana (Mouse-ear cress), this protein is Agamous-like MADS-box protein AGL17 (AGL17).